The primary structure comprises 86 residues: Anti-adapter protein IraP (86 aa).

Residues 1-36 (MKNLIAELLFKLAQKEEESKELCAQVEALEIIVTAM) are a coiled coil.

Belongs to the IraP family. As to quaternary structure, interacts with RssB.

It is found in the cytoplasm. In terms of biological role, inhibits RpoS proteolysis by regulating RssB activity, thereby increasing the stability of the sigma stress factor RpoS especially during phosphate starvation, but also in stationary phase and during nitrogen starvation. Its effect on RpoS stability is due to its interaction with RssB, which probably blocks the interaction of RssB with RpoS, and the consequent delivery of the RssB-RpoS complex to the ClpXP protein degradation pathway. The protein is Anti-adapter protein IraP of Escherichia coli O7:K1 (strain IAI39 / ExPEC).